Here is a 402-residue protein sequence, read N- to C-terminus: Glutamate N-acetyltransferase (402 aa).

Residues Thr-151, Lys-178, Thr-189, Glu-267, Asn-397, and Thr-402 each coordinate substrate. The active-site Nucleophile is the Thr-189.

It belongs to the ArgJ family. Heterotetramer of two alpha and two beta chains.

Its subcellular location is the cytoplasm. It carries out the reaction N(2)-acetyl-L-ornithine + L-glutamate = N-acetyl-L-glutamate + L-ornithine. It participates in amino-acid biosynthesis; L-arginine biosynthesis; L-ornithine and N-acetyl-L-glutamate from L-glutamate and N(2)-acetyl-L-ornithine (cyclic): step 1/1. In terms of biological role, catalyzes the transfer of the acetyl group from N(2)-acetylornithine to glutamate, forming N-acetylglutamate and L-ornithine. The sequence is that of Glutamate N-acetyltransferase from Methanothermobacter thermautotrophicus (strain ATCC 29096 / DSM 1053 / JCM 10044 / NBRC 100330 / Delta H) (Methanobacterium thermoautotrophicum).